Here is a 787-residue protein sequence, read N- to C-terminus: Phenylalanine--tRNA ligase beta subunit (787 aa).

Positions 39–149 (APAFSGVVVA…EDAPVGTNIR (111 aa)) constitute a tRNA-binding domain. Residues 400–475 (PEAKQVGLRL…RVYGYENIPD (76 aa)) form the B5 domain. Residues D453, D459, E462, and E463 each contribute to the Mg(2+) site. The FDX-ACB domain maps to 694-786 (SKFQPVRRDL…VATEAGARLR (93 aa)).

Belongs to the phenylalanyl-tRNA synthetase beta subunit family. Type 1 subfamily. As to quaternary structure, tetramer of two alpha and two beta subunits. Mg(2+) is required as a cofactor.

It localises to the cytoplasm. The catalysed reaction is tRNA(Phe) + L-phenylalanine + ATP = L-phenylalanyl-tRNA(Phe) + AMP + diphosphate + H(+). This Neisseria gonorrhoeae (strain ATCC 700825 / FA 1090) protein is Phenylalanine--tRNA ligase beta subunit.